The primary structure comprises 278 residues: NAD-capped RNA hydrolase NudC (278 aa).

Position 84 (R84) interacts with substrate. Zn(2+) contacts are provided by C114 and C117. E127 contributes to the substrate binding site. Zn(2+)-binding residues include C132 and C135. A substrate-binding site is contributed by Y140. Residues 141–265 (PRLSPSMIVL…IARHLIDLYL (125 aa)) enclose the Nudix hydrolase domain. Residues A174, E190, and E194 each coordinate a divalent metal cation. The Nudix box signature appears at 175–196 (GFVEAGESVEQCVVREVREEVG). Position 208-215 (208-215 (QNWPFPHS)) interacts with substrate. Position 235 (E235) interacts with a divalent metal cation. A257 contacts substrate.

Belongs to the Nudix hydrolase family. NudC subfamily. Homodimer. The cofactor is Mg(2+). Requires Mn(2+) as cofactor. Zn(2+) is required as a cofactor.

It carries out the reaction a 5'-end NAD(+)-phospho-ribonucleoside in mRNA + H2O = a 5'-end phospho-adenosine-phospho-ribonucleoside in mRNA + beta-nicotinamide D-ribonucleotide + 2 H(+). It catalyses the reaction NAD(+) + H2O = beta-nicotinamide D-ribonucleotide + AMP + 2 H(+). The catalysed reaction is NADH + H2O = reduced beta-nicotinamide D-ribonucleotide + AMP + 2 H(+). Functionally, mRNA decapping enzyme that specifically removes the nicotinamide adenine dinucleotide (NAD) cap from a subset of mRNAs by hydrolyzing the diphosphate linkage to produce nicotinamide mononucleotide (NMN) and 5' monophosphate mRNA. The NAD-cap is present at the 5'-end of some mRNAs and stabilizes RNA against 5'-processing. Has preference for mRNAs with a 5'-end purine. Catalyzes the hydrolysis of a broad range of dinucleotide pyrophosphates. The polypeptide is NAD-capped RNA hydrolase NudC (Pseudomonas aeruginosa (strain ATCC 15692 / DSM 22644 / CIP 104116 / JCM 14847 / LMG 12228 / 1C / PRS 101 / PAO1)).